The sequence spans 1025 residues: Multidrug resistance protein MdtC (1025 aa).

The next 12 membrane-spanning stretches (helical) occupy residues 3 to 23 (FFALFIYRPVATILLSVAITL), 333 to 353 (EVEQTLIISVALVILVVFLFL), 360 to 380 (IIPAVSVPVSLIGTFAAMYLC), 387 to 407 (LSLMALTIATGFVVDDAIVVL), 431 to 451 (VGFTVLSMSLSLVAVFLPLLL), 463 to 483 (FAVTLSVAIGISLLVSLTLTP), 528 to 548 (LVGVVLLGTIALNIWLYISIP), 853 to 873 (VILIIAAIATVYIVLGILYES), 875 to 895 (VHPLTILSTLPSAGVGALLAL), 897 to 917 (LFNAPFSLIALIGIMLLIGIV), 953 to 973 (PIMMTTLAALFGALPLVLSGG), and 984 to 1004 (ITIVGGLVMSQLLTLYTTPVV).

Belongs to the resistance-nodulation-cell division (RND) (TC 2.A.6) family. MdtC subfamily. In terms of assembly, part of a tripartite efflux system composed of MdtA, MdtB and MdtC. MdtC forms a heteromultimer with MdtB.

Its subcellular location is the cell inner membrane. In terms of biological role, the MdtABC tripartite complex confers resistance against novobiocin and deoxycholate. The protein is Multidrug resistance protein MdtC of Escherichia coli (strain ATCC 8739 / DSM 1576 / NBRC 3972 / NCIMB 8545 / WDCM 00012 / Crooks).